Reading from the N-terminus, the 217-residue chain is tRNA 5-hydroxyuridine methyltransferase (217 aa).

S-adenosyl-L-methionine-binding positions include Met38, Ser68, Glu85, 113–114 (DA), and Asp133. Mg(2+)-binding residues include Asp133, Asp159, and Asn160.

This sequence belongs to the class I-like SAM-binding methyltransferase superfamily. Cation-dependent O-methyltransferase family. As to quaternary structure, homodimer.

The catalysed reaction is 5-hydroxyuridine(34) in tRNA + S-adenosyl-L-methionine = 5-methoxyuridine(34) in tRNA + S-adenosyl-L-homocysteine + H(+). Catalyzes the methylation of 5-hydroxyuridine (ho5U) to form 5-methoxyuridine (mo5U) at position 34 in tRNAs. The protein is tRNA 5-hydroxyuridine methyltransferase of Bacillus subtilis (strain 168).